A 159-amino-acid polypeptide reads, in one-letter code: Transcription elongation factor A protein-like 1 (159 aa).

The interval 1–120 is disordered; it reads MEKACKEPEE…PQFRGDIHGR (120 aa). Residues 17 to 34 are compositionally biased toward basic and acidic residues; sequence KADEERPSVEPSPEKSSP. Over residues 37 to 54 the composition is skewed to acidic residues; that stretch reads QSSEEVSSEEEFFPDELL. 2 stretches are compositionally biased toward basic and acidic residues: residues 64–80 and 95–119; these read SEER…DLFE and HKLE…DIHG.

The protein belongs to the TFS-II family. TFA subfamily.

The protein localises to the nucleus. Its function is as follows. May be involved in transcriptional regulation. Modulates various viral and cellular promoters in a promoter context-dependent manner. Does not bind DNA directly. The sequence is that of Transcription elongation factor A protein-like 1 from Bos taurus (Bovine).